Consider the following 323-residue polypeptide: Breast cancer metastasis-suppressor 1-like protein (323 aa).

The span at 1–17 shows a compositional bias: basic and acidic residues; the sequence is MPVHSRGDKKETNHHDE. Positions 1–56 are disordered; it reads MPVHSRGDKKETNHHDEMEVDYAENEGSSSEDEDTESSSVSEDGDSSEMDDEDCER. The span at 18-53 shows a compositional bias: acidic residues; it reads MEVDYAENEGSSSEDEDTESSSVSEDGDSSEMDDED. Coiled-coil stretches lie at residues 52–84 and 149–180; these read EDCERRRMECLDEMSNLEKQFTDLKDQLYKERL and EKLLLYDTVQSELEEKIRRLEEDRHSIDITSE. Residue Ser-197 is modified to Phosphoserine. Residues Lys-240 and Lys-246 each participate in a glycyl lysine isopeptide (Lys-Gly) (interchain with G-Cter in SUMO2) cross-link.

It belongs to the BRMS1 family. In terms of assembly, component of the Sin3/HDAC1 corepressor complex at least composed of BRMS1, BRMS1L and ING2/ING1L. Interacts with HDAC and SIN3A.

It is found in the nucleus. Functionally, involved in the histone deacetylase (HDAC1)-dependent transcriptional repression activity. When overexpressed in lung cancer cell line that lacks p53/TP53 expression, inhibits cell growth. The polypeptide is Breast cancer metastasis-suppressor 1-like protein (BRMS1L) (Bos taurus (Bovine)).